An 87-amino-acid polypeptide reads, in one-letter code: Small ribosomal subunit protein bS20 (87 aa).

Residues 1–26 (MANTKSALKRIRQTATRTARNRAVTS) are disordered. Residues 13-23 (QTATRTARNRA) show a composition bias toward low complexity.

It belongs to the bacterial ribosomal protein bS20 family.

Binds directly to 16S ribosomal RNA. The protein is Small ribosomal subunit protein bS20 of Akkermansia muciniphila (strain ATCC BAA-835 / DSM 22959 / JCM 33894 / BCRC 81048 / CCUG 64013 / CIP 107961 / Muc).